The sequence spans 1014 residues: Pre-mRNA-processing ATP-dependent RNA helicase prp11 (1014 aa).

The segment covering 1 to 11 has biased composition (basic residues); that stretch reads MSRRTRSRSPP. The disordered stretch occupies residues 1–149; sequence MSRRTRSRSP…SRFDRTERVG (149 aa). Composition is skewed to basic and acidic residues over residues 15–87 and 106–121; these read YNRE…EYAR and RHAE…KSDE. Residues 418-446 carry the Q motif motif; sequence TSWSQCGLSAQTISVINSLGYEKPTSIQA. The Helicase ATP-binding domain maps to 449–627; sequence IPAITSGRDV…RKVLKKPVEI (179 aa). 462-469 serves as a coordination point for ATP; the sequence is AKTGSGKT. The DEAD box motif lies at 575–578; the sequence is DEAD. One can recognise a Helicase C-terminal domain in the interval 638 to 802; the sequence is EVEQIVEVRP…PVPKELQTLA (165 aa). The segment at 815–875 is disordered; the sequence is KAAGGGFGGK…PEKSTGDPTL (61 aa). Basic and acidic residues-rich tracts occupy residues 827-838 and 855-875; these read SRLDETRNAERK and AEAK…DPTL.

Belongs to the DEAD box helicase family. DDX46/PRP5 subfamily.

It is found in the nucleus. It catalyses the reaction ATP + H2O = ADP + phosphate + H(+). Functionally, ATP-dependent RNA helicase involved in pre-spliceosome/complex A assembly and mRNA splicing. Bridges U1 and U2 snRNPs during pre-spliceosome assembly and enables stable U2 snRNP association with intron RNA. Through its helicase activity probably catalyzes an ATP-dependent conformational change of U2 snRNP. This is Pre-mRNA-processing ATP-dependent RNA helicase prp11 (prp11) from Schizosaccharomyces pombe (strain 972 / ATCC 24843) (Fission yeast).